The chain runs to 132 residues: Fatty acid-binding protein 9 (132 aa).

6 positions are modified to phosphoserine: serine 13, serine 14, serine 40, serine 42, serine 44, and serine 91.

The protein belongs to the calycin superfamily. Fatty-acid binding protein (FABP) family. Testis.

It localises to the cytoplasm. The chain is Fatty acid-binding protein 9 (Fabp9) from Mus musculus (Mouse).